Reading from the N-terminus, the 378-residue chain is D-galactarolactone cycloisomerase (378 aa).

Residues D194, E220, and E246 each contribute to the Mg(2+) site. H296 serves as the catalytic Proton acceptor.

Belongs to the mandelate racemase/muconate lactonizing enzyme family. In terms of assembly, homooctamer. Requires Mg(2+) as cofactor.

It catalyses the reaction D-glucaro-1,4-lactone = 5-dehydro-4-deoxy-D-glucarate + H(+). The catalysed reaction is D-galactaro-1,4-lactone = 5-dehydro-4-deoxy-D-glucarate + H(+). It participates in carbohydrate acid metabolism; D-galacturonate degradation via prokaryotic oxidative pathway. Functionally, catalyzes the ring opening of D-galactaro-1,4-lactone to yield 5-keto-4-deoxy-D-glucarate (KDG) via a beta-elimination reaction. This is a step in the oxidative degradation pathway of D-galacturonate, which allows A.tumefaciens to utilize D-galacturonate as a sole carbon source. To a lesser extent, can also use D-glucaro-1,4-lactone as substrate to produce KDG, but cannot use D-galactaro-1,5-lactone, D-glucaro-6,3-lactone and linear D-glucarate. The protein is D-galactarolactone cycloisomerase (gci) of Agrobacterium fabrum (strain C58 / ATCC 33970) (Agrobacterium tumefaciens (strain C58)).